The sequence spans 758 residues: Meiotic driver SPOK4 (758 aa).

Residues Lys-4–Glu-41 adopt a coiled-coil conformation. Disordered stretches follow at residues Glu-180–Ile-230 and Leu-414–Pro-499. Positions Leu-181 to Gly-190 are enriched in basic and acidic residues. Residues Ser-416 to Thr-429 are compositionally biased toward polar residues. The span at Asn-457 to Glu-468 shows a compositional bias: basic and acidic residues.

The protein localises to the cytoplasm. Its subcellular location is the nucleus. Functionally, promotes unequal transmission of alleles from the parental zygote to progeny spores by acting as poison/antidote system, leading to poisoning of progeny that do not inherit the allele. May possess DNA nuclease activity that leads to spore killing, and a kinase activity that confers resistance to the nuclease activity. Can suppress meiotic drive by the P.comata SPOK1 protein. This Podospora anserina (Pleurage anserina) protein is Meiotic driver SPOK4.